The sequence spans 328 residues: MNILSIETSCDETSVAITQDGKKVLSNIVFSQIKDHQMFGGVVPEIASRKHVELITLILEKAFQKACLTPQEIDLVAVTQGPGLVGSLLVGINAANVFAYTYQKPLLGINHLLGHLYAAQIEHQIKPNALILLVSGGHTELLHFKNHDQIEVLGTTLDDALGEVYDKIAKALHLGYPGGPLIDQLAQTGKDTYHLVRPYLKNNNFNFSFSGLKSHLVNLLLKQNIQDLNIPNICASFQASVIDVLLTKTKRVLKKLPIQQLIVTGGVASNSALRKKMKETFLDLEVIFPSVQYCTDQAAMIGIAAFYQKNITPPSYKYDLTALPNLTF.

His111 and His115 together coordinate Fe cation. Substrate-binding positions include 133-137 (LVSGG), Asp166, Gly179, Asp183, and Asn270. Residue Asp296 coordinates Fe cation.

It belongs to the KAE1 / TsaD family. It depends on Fe(2+) as a cofactor.

It is found in the cytoplasm. It catalyses the reaction L-threonylcarbamoyladenylate + adenosine(37) in tRNA = N(6)-L-threonylcarbamoyladenosine(37) in tRNA + AMP + H(+). Functionally, required for the formation of a threonylcarbamoyl group on adenosine at position 37 (t(6)A37) in tRNAs that read codons beginning with adenine. Is involved in the transfer of the threonylcarbamoyl moiety of threonylcarbamoyl-AMP (TC-AMP) to the N6 group of A37, together with TsaE and TsaB. TsaD likely plays a direct catalytic role in this reaction. This is tRNA N6-adenosine threonylcarbamoyltransferase from Phytoplasma australiense.